Reading from the N-terminus, the 35-residue chain is MEALVYTFLLVSTLGIIFFAIFFREPPKVPNKKMK.

A helical membrane pass occupies residues 3–23; sequence ALVYTFLLVSTLGIIFFAIFF.

The protein belongs to the PsbT family. PSII is composed of 1 copy each of membrane proteins PsbA, PsbB, PsbC, PsbD, PsbE, PsbF, PsbH, PsbI, PsbJ, PsbK, PsbL, PsbM, PsbT, PsbY, PsbZ, Psb30/Ycf12, at least 3 peripheral proteins of the oxygen-evolving complex and a large number of cofactors. It forms dimeric complexes.

Its subcellular location is the plastid. It localises to the chloroplast thylakoid membrane. Functionally, found at the monomer-monomer interface of the photosystem II (PS II) dimer, plays a role in assembly and dimerization of PSII. PSII is a light-driven water plastoquinone oxidoreductase, using light energy to abstract electrons from H(2)O, generating a proton gradient subsequently used for ATP formation. This chain is Photosystem II reaction center protein T, found in Schisandra chinensis (Chinese magnolia vine).